A 126-amino-acid polypeptide reads, in one-letter code: Muscarinic acetylcholine receptor M4 (126 aa).

The interval 1-90 (MKQSVKKPPP…LQPRTLNPAS (90 aa)) is disordered. Residues 1–126 (MKQSVKKPPP…PAGMRPAANV (126 aa)) are Cytoplasmic-facing. Over residues 28–39 (APPPVLPPPPRP) the composition is skewed to pro residues. Over residues 47–57 (NESSSGSATQN) the composition is skewed to polar residues. Residues 64–75 (TELSTTEATTPA) are compositionally biased toward low complexity.

Belongs to the G-protein coupled receptor 1 family. Muscarinic acetylcholine receptor subfamily. CHRM4 sub-subfamily.

The protein resides in the cell membrane. It is found in the postsynaptic cell membrane. In terms of biological role, the muscarinic acetylcholine receptor mediates various cellular responses, including inhibition of adenylate cyclase, breakdown of phosphoinositides and modulation of potassium channels through the action of G proteins. Primary transducing effect is inhibition of adenylate cyclase. May couple to multiple functional responses in cell lines. This is Muscarinic acetylcholine receptor M4 (CHRM4) from Bos taurus (Bovine).